Here is a 316-residue protein sequence, read N- to C-terminus: Methionyl-tRNA formyltransferase (316 aa).

(6S)-5,6,7,8-tetrahydrofolate is bound at residue 112-115 (SLLP).

The protein belongs to the Fmt family.

The catalysed reaction is L-methionyl-tRNA(fMet) + (6R)-10-formyltetrahydrofolate = N-formyl-L-methionyl-tRNA(fMet) + (6S)-5,6,7,8-tetrahydrofolate + H(+). Attaches a formyl group to the free amino group of methionyl-tRNA(fMet). The formyl group appears to play a dual role in the initiator identity of N-formylmethionyl-tRNA by promoting its recognition by IF2 and preventing the misappropriation of this tRNA by the elongation apparatus. The chain is Methionyl-tRNA formyltransferase from Actinobacillus pleuropneumoniae serotype 7 (strain AP76).